The chain runs to 125 residues: Glucose-1-phosphate adenylyltransferase small subunit (125 aa).

The protein belongs to the bacterial/plant glucose-1-phosphate adenylyltransferase family. As to quaternary structure, heterotetramer. In terms of tissue distribution, leaves.

The protein localises to the plastid. The protein resides in the chloroplast. It is found in the amyloplast. The enzyme catalyses alpha-D-glucose 1-phosphate + ATP + H(+) = ADP-alpha-D-glucose + diphosphate. It functions in the pathway glycan biosynthesis; starch biosynthesis. With respect to regulation, activated by 3'phosphoglycerate, inhibited by orthophosphate. Allosteric regulation. In terms of biological role, this protein plays a role in synthesis of starch. It catalyzes the synthesis of the activated glycosyl donor, ADP-glucose from Glc-1-P and ATP. In Zea mays (Maize), this protein is Glucose-1-phosphate adenylyltransferase small subunit (GLG1).